Here is a 431-residue protein sequence, read N- to C-terminus: Polyprenol-phosphate-mannose-dependent alpha-(1-2)-phosphatidylinositol pentamannoside mannosyltransferase (431 aa).

The next 10 membrane-spanning stretches (helical) occupy residues 43–63, 108–128, 148–168, 175–195, 202–222, 229–249, 290–310, 332–352, 364–384, and 397–417; these read AAVL…YLAP, FAAV…ALLW, GGTA…AIWI, FDYG…VYTP, LLVG…VYLV, AAAF…LVVG, GFGP…ILAW, LSPI…IWLI, ILGW…LSFA, and LAWA…WIAA.

Belongs to the glycosyltransferase 87 family.

The protein resides in the cell membrane. It functions in the pathway phospholipid metabolism; phosphatidylinositol metabolism. Catalyzes the alpha-1,2 addition of a mannose residue from polyprenol-phosphate-mannose (PPM) to a monoacyl phosphatidylinositol tetramannoside (AcPIM4) to generate a monoacyl phosphatidylinositol pentamannoside (AcPIM5). In Mycobacterium tuberculosis (strain CDC 1551 / Oshkosh), this protein is Polyprenol-phosphate-mannose-dependent alpha-(1-2)-phosphatidylinositol pentamannoside mannosyltransferase (pimE).